The sequence spans 122 residues: Large ribosomal subunit protein uL14 (122 aa).

This sequence belongs to the universal ribosomal protein uL14 family. In terms of assembly, part of the 50S ribosomal subunit. Forms a cluster with proteins L3 and L19. In the 70S ribosome, L14 and L19 interact and together make contacts with the 16S rRNA in bridges B5 and B8.

Functionally, binds to 23S rRNA. Forms part of two intersubunit bridges in the 70S ribosome. In Agrobacterium fabrum (strain C58 / ATCC 33970) (Agrobacterium tumefaciens (strain C58)), this protein is Large ribosomal subunit protein uL14.